Reading from the N-terminus, the 352-residue chain is Ribosomal RNA large subunit methyltransferase M (352 aa).

S-adenosyl-L-methionine is bound by residues Ser184, 217-220, Asp236, Asp256, and Asp272; that span reads APGG. The Proton acceptor role is filled by Lys301.

The protein belongs to the class I-like SAM-binding methyltransferase superfamily. RNA methyltransferase RlmE family. RlmM subfamily. As to quaternary structure, monomer.

It localises to the cytoplasm. The enzyme catalyses cytidine(2498) in 23S rRNA + S-adenosyl-L-methionine = 2'-O-methylcytidine(2498) in 23S rRNA + S-adenosyl-L-homocysteine + H(+). In terms of biological role, catalyzes the 2'-O-methylation at nucleotide C2498 in 23S rRNA. This chain is Ribosomal RNA large subunit methyltransferase M, found in Pseudomonas aeruginosa (strain UCBPP-PA14).